Here is a 451-residue protein sequence, read N- to C-terminus: uncharacterized protein (451 aa).

D305, D316, H384, E414, and E428 together coordinate Mn(2+).

This sequence belongs to the peptidase M24B family. The cofactor is Mn(2+).

This is an uncharacterized protein from Schizosaccharomyces pombe (strain 972 / ATCC 24843) (Fission yeast).